Reading from the N-terminus, the 150-residue chain is uncharacterized protein (150 aa).

The next 4 membrane-spanning stretches (helical) occupy residues 32-52 (ILYG…AVSL), 64-84 (FNWL…FISG), 94-114 (IGAL…YLGF), and 123-143 (LIFH…GVNM).

The protein localises to the cell membrane. This is an uncharacterized protein from Bacillus subtilis (strain 168).